We begin with the raw amino-acid sequence, 342 residues long: Ribosomal RNA small subunit methyltransferase H (342 aa).

S-adenosyl-L-methionine-binding positions include G42–H44, D61, F88, D119, and Q126.

Belongs to the methyltransferase superfamily. RsmH family.

The protein localises to the cytoplasm. It carries out the reaction cytidine(1402) in 16S rRNA + S-adenosyl-L-methionine = N(4)-methylcytidine(1402) in 16S rRNA + S-adenosyl-L-homocysteine + H(+). Functionally, specifically methylates the N4 position of cytidine in position 1402 (C1402) of 16S rRNA. The sequence is that of Ribosomal RNA small subunit methyltransferase H from Corynebacterium jeikeium (strain K411).